The primary structure comprises 335 residues: UDP-N-acetylglucosamine--N-acetylmuramyl-(pentapeptide) pyrophosphoryl-undecaprenol N-acetylglucosamine transferase (335 aa).

UDP-N-acetyl-alpha-D-glucosamine is bound by residues threonine 9–glycine 11, asparagine 123, serine 176, and glutamine 274.

The protein belongs to the glycosyltransferase 28 family. MurG subfamily.

It localises to the cell inner membrane. It carries out the reaction di-trans,octa-cis-undecaprenyl diphospho-N-acetyl-alpha-D-muramoyl-L-alanyl-D-glutamyl-meso-2,6-diaminopimeloyl-D-alanyl-D-alanine + UDP-N-acetyl-alpha-D-glucosamine = di-trans,octa-cis-undecaprenyl diphospho-[N-acetyl-alpha-D-glucosaminyl-(1-&gt;4)]-N-acetyl-alpha-D-muramoyl-L-alanyl-D-glutamyl-meso-2,6-diaminopimeloyl-D-alanyl-D-alanine + UDP + H(+). Its pathway is cell wall biogenesis; peptidoglycan biosynthesis. In terms of biological role, cell wall formation. Catalyzes the transfer of a GlcNAc subunit on undecaprenyl-pyrophosphoryl-MurNAc-pentapeptide (lipid intermediate I) to form undecaprenyl-pyrophosphoryl-MurNAc-(pentapeptide)GlcNAc (lipid intermediate II). The chain is UDP-N-acetylglucosamine--N-acetylmuramyl-(pentapeptide) pyrophosphoryl-undecaprenol N-acetylglucosamine transferase from Campylobacter fetus subsp. fetus (strain 82-40).